A 451-amino-acid chain; its full sequence is Trimethylamine monooxygenase (451 aa).

Positions 12, 37, 39, 45, 46, and 62 each coordinate FAD. NADP(+) contacts are provided by tryptophan 70 and asparagine 72. The FAD site is built by asparagine 72 and valine 125. The NADP(+) site is built by serine 204, serine 205, serine 207, and arginine 228. Glutamine 317 and threonine 320 together coordinate FAD. Arginine 411 serves as a coordination point for NADP(+).

Belongs to the FMO family. The cofactor is FAD.

The enzyme catalyses trimethylamine + NADPH + O2 = trimethylamine N-oxide + NADP(+) + H2O. Catalyzes the oxidation of trimethylamine (TMA) to produce trimethylamine N-oxide (TMAO). In vitro, has a broad substrate specificity, oxidizing many nitrogen- and sulfur-containing compounds, including dimethylamine (DMA), dimethylsulfide (DMS), dimethylsulfoxide (DMSO), cysteamine, methimazole and dimethylaniline. The sequence is that of Trimethylamine monooxygenase from Methylocella silvestris (strain DSM 15510 / CIP 108128 / LMG 27833 / NCIMB 13906 / BL2).